The sequence spans 119 residues: Large ribosomal subunit protein uL22 (119 aa).

The protein belongs to the universal ribosomal protein uL22 family. Part of the 50S ribosomal subunit.

In terms of biological role, this protein binds specifically to 23S rRNA; its binding is stimulated by other ribosomal proteins, e.g. L4, L17, and L20. It is important during the early stages of 50S assembly. It makes multiple contacts with different domains of the 23S rRNA in the assembled 50S subunit and ribosome. Functionally, the globular domain of the protein is located near the polypeptide exit tunnel on the outside of the subunit, while an extended beta-hairpin is found that lines the wall of the exit tunnel in the center of the 70S ribosome. This is Large ribosomal subunit protein uL22 from Rickettsia peacockii (strain Rustic).